The sequence spans 91 residues: RNA-binding protein Hfq (91 aa).

Residues 9–68 (DPFLNALRRERVPVSIYLVNGIKLQGQVESFDQFVILLKNTVSQMVYKHAISTVVPSRPF) enclose the Sm domain. Residues 66-91 (RPFNVGSHQGGSSNYNAQQDDSAGEQ) form a disordered region. Polar residues predominate over residues 71-91 (GSHQGGSSNYNAQQDDSAGEQ).

The protein belongs to the Hfq family. Homohexamer.

Its function is as follows. RNA chaperone that binds small regulatory RNA (sRNAs) and mRNAs to facilitate mRNA translational regulation in response to envelope stress, environmental stress and changes in metabolite concentrations. Also binds with high specificity to tRNAs. The protein is RNA-binding protein Hfq of Shewanella amazonensis (strain ATCC BAA-1098 / SB2B).